The primary structure comprises 357 residues: MELWQTFVKMVHALVPWLDGTVAIILIIFIKAIALLIPLMLVVAYFTYAERKVIGYMQLRIGPNRVGPKGWLQPIADALKLMTKEIIFPTKANIYLFLLAPVLAIAPAIAVWAVIPFDESIYITNLDISLLYVLAIGSIGVYGIILAGWASNSKYPLLGALRSAALLVSYEIVIGFALVTVVMIAGSVNLNTIVQAQQGGIIYWYFIPLFPIMIIFFISSLVETNRAPFDVVEGESEIVGGTHVEYSGMTFAVFFLAEYANMILMAVLSVIMFFGGWHSPFEAIPYLESVFSWIPGMIWLLAKTTFFMFLYLWVRATFPRFRYDQIMHLSWKVFLPITIIWIFVVALMTQLQLSPWF.

Transmembrane regions (helical) follow at residues 22–42 (VAII…LMLV), 94–114 (IYLF…VWAV), 130–150 (LLYV…AGWA), 164–184 (AALL…VVMI), 199–219 (GGII…FFIS), 254–274 (FFLA…IMFF), 294–314 (IPGM…YLWV), and 333–353 (VFLP…QLQL).

The protein belongs to the complex I subunit 1 family. As to quaternary structure, NDH-1 is composed of 14 different subunits. Subunits NuoA, H, J, K, L, M, N constitute the membrane sector of the complex.

It localises to the cell inner membrane. It catalyses the reaction a quinone + NADH + 5 H(+)(in) = a quinol + NAD(+) + 4 H(+)(out). Functionally, NDH-1 shuttles electrons from NADH, via FMN and iron-sulfur (Fe-S) centers, to quinones in the respiratory chain. The immediate electron acceptor for the enzyme in this species is believed to be ubiquinone. Couples the redox reaction to proton translocation (for every two electrons transferred, four hydrogen ions are translocated across the cytoplasmic membrane), and thus conserves the redox energy in a proton gradient. This subunit may bind ubiquinone. This Vesicomyosocius okutanii subsp. Calyptogena okutanii (strain HA) protein is NADH-quinone oxidoreductase subunit H.